The chain runs to 613 residues: ATP-dependent zinc metalloprotease FtsH (613 aa).

Topologically, residues 1–4 (MVKN) are cytoplasmic. A helical transmembrane segment spans residues 5 to 25 (LIFWLVITVVLMSVFQNFNSS). Residues 26-98 (DTSNHRVDYS…VGEIPEEPSL (73 aa)) are Extracellular-facing. A helical membrane pass occupies residues 99–119 (LISIFISWFPMLLLIGVWIFF). Residues 120-613 (MRQMQMGGGK…WLEVDQKKDI (494 aa)) are Cytoplasmic-facing. Position 192–199 (192–199 (GPPGTGKT)) interacts with ATP. Histidine 414 provides a ligand contact to Zn(2+). The active site involves glutamate 415. Residues histidine 418 and aspartate 492 each coordinate Zn(2+).

The protein in the central section; belongs to the AAA ATPase family. This sequence in the C-terminal section; belongs to the peptidase M41 family. In terms of assembly, homohexamer. Requires Zn(2+) as cofactor.

The protein resides in the cell membrane. In terms of biological role, acts as a processive, ATP-dependent zinc metallopeptidase for both cytoplasmic and membrane proteins. Plays a role in the quality control of integral membrane proteins. The protein is ATP-dependent zinc metalloprotease FtsH of Buchnera aphidicola subsp. Schizaphis graminum (strain Sg).